We begin with the raw amino-acid sequence, 139 residues long: Crossover junction endodeoxyribonuclease Hje (139 aa).

3 residues coordinate Mg(2+): glutamate 10, aspartate 39, and glutamate 52.

This sequence belongs to the Holliday junction resolvase Hjc family. Hje subfamily. In terms of assembly, homodimer. It depends on Mg(2+) as a cofactor.

The catalysed reaction is Endonucleolytic cleavage at a junction such as a reciprocal single-stranded crossover between two homologous DNA duplexes (Holliday junction).. In terms of biological role, a structure-specific endonuclease that resolves Holliday junction (HJ) intermediates during genetic recombination. Acts only on 4-way DNA junctions in a sequence non-specific manner; introduces paired nicks in opposing strands 2 bases 3' of the point of strand exchange only on continuous strands of 4-way junction DNA. Cleaves both mobile and immobile junctions. Functionally, redundant function with Holliday junction resolvase Hjc. The protein is Crossover junction endodeoxyribonuclease Hje of Sulfolobus acidocaldarius (strain ATCC 33909 / DSM 639 / JCM 8929 / NBRC 15157 / NCIMB 11770).